A 416-amino-acid polypeptide reads, in one-letter code: Probable pectate lyase 8 (416 aa).

Positions methionine 1–alanine 24 are cleaved as a signal peptide. Residues asparagine 23, asparagine 28, and asparagine 52 are each glycosylated (N-linked (GlcNAc...) asparagine). Ca(2+)-binding residues include aspartate 214, aspartate 238, and aspartate 242. The active site involves arginine 294.

This sequence belongs to the polysaccharide lyase 1 family. Ca(2+) serves as cofactor.

It carries out the reaction Eliminative cleavage of (1-&gt;4)-alpha-D-galacturonan to give oligosaccharides with 4-deoxy-alpha-D-galact-4-enuronosyl groups at their non-reducing ends.. It functions in the pathway glycan metabolism; pectin degradation; 2-dehydro-3-deoxy-D-gluconate from pectin: step 2/5. This is Probable pectate lyase 8 from Arabidopsis thaliana (Mouse-ear cress).